The following is an 818-amino-acid chain: Protein Cep78 homolog (818 aa).

Disordered regions lie at residues 513 to 589 (LDVE…HEFA), 691 to 748 (RQAN…TEAT), and 768 to 798 (KQSE…DQNV). The span at 514–539 (DVEEEEEEEEEEQQAEESQSESEPQN) shows a compositional bias: acidic residues. Positions 561–589 (VRSEIKYVENNPKEAAKKNRESKSDHEFA) are enriched in basic and acidic residues. The segment covering 782 to 792 (GDAGGGGGSGD) has biased composition (gly residues).

Belongs to the CEP78 family.

The protein localises to the cytoplasm. It localises to the cytoskeleton. The protein resides in the microtubule organizing center. Its subcellular location is the centrosome. It is found in the centriole. The protein localises to the cilium basal body. May play a role in cilium biogenesis. The protein is Protein Cep78 homolog of Drosophila melanogaster (Fruit fly).